The primary structure comprises 315 residues: tRNA-dihydrouridine(16) synthase (315 aa).

FMN is bound by residues Pro7–Glu9 and Gln68. Cys98 functions as the Proton donor in the catalytic mechanism. FMN-binding positions include Lys139, Asn200–Glu202, and Gly224–Arg225.

It belongs to the Dus family. DusC subfamily. It depends on FMN as a cofactor.

The catalysed reaction is 5,6-dihydrouridine(16) in tRNA + NADP(+) = uridine(16) in tRNA + NADPH + H(+). It catalyses the reaction 5,6-dihydrouridine(16) in tRNA + NAD(+) = uridine(16) in tRNA + NADH + H(+). Catalyzes the synthesis of 5,6-dihydrouridine (D), a modified base found in the D-loop of most tRNAs, via the reduction of the C5-C6 double bond in target uridines. DusC specifically modifies U16 in tRNAs. The chain is tRNA-dihydrouridine(16) synthase from Escherichia coli (strain K12).